We begin with the raw amino-acid sequence, 794 residues long: MASKSDKQVTVEVKNNNNGRNRSRSRARSQSRGRGKSVKITVNSRSRGRRQNGRDKYQSNQRVRNIVTKQLRKQGVTGPKPAICQRATATLGTIGSNTSGTTEIEACILLNPVLVKDATGSTQFGPVQALGAQYSMWKLKYLNVKLTSMVGASAVNGTVVRVSLNPTSTPSSTSWSGLGARKHLDVTVGKNAVFKLKPADLGGPRDGWWLTNTNDNASDTLGPSVEIHTLGMTMSSYKNEQFTGGLFLVELASEWCFTGYAANPNLVNLEKSTDKQVNVTFEGSNGTPLIMKVPEASHFARTAVARSSLPTTLARAGQNTTSDTVWQVLNTAVSAAELVTPPPFNWLVKGGWWFVKLIAGRARTGTRSFYVYPSYQDALSNKPALCTGSAPSGMRSRAAVMTTLQFTQMNQPSLGHGEMTATLGRAIPSPGDTFNVVLTIGQPLAPNTLTKQSWLNKTTVSPQNHHVVKIAKDVNNYTTMQGFTPISSVDWYTTDFQPSEEPTPIPGLQVLVNSSKKADVYAIQQYLNNQTNNKVQLTSIFLVKVTTSFQVNNYLSYFYRSYGTGTTVENLKVRSDTTAQDVNFPVGWYLMTNTAIFNAPAPPGWIWQNVELLNDTAYLIDQGMMHLIMPPPANTQLLFEMRTSVTGSRSMISSEEPDTHEPGDEWCDALDASDSRVFLEETDYEDEEDEDEDDEADRFDLHSSYGSEPEDDDENNRVTLLSTLINQGMTVERATRITKRAFPTSADKTKRSVYMDLLASGLSPGNAWSHACEEARIMGTNQMPNVSGDRGHAE.

The segment at 1 to 59 (MASKSDKQVTVEVKNNNNGRNRSRSRARSQSRGRGKSVKITVNSRSRGRRQNGRDKYQS) is disordered. A basic region spans residues 1–72 (MASKSDKQVT…VRNIVTKQLR (72 aa)). Positions 21 to 37 (NRSRSRARSQSRGRGKS) are enriched in basic residues. The tract at residues 73–265 (KQGVTGPKPA…CFTGYAANPN (193 aa)) is inner core. The segment at 396 to 425 (SRAAVMTTLQFTQMNQPSLGHGEMTATLGR) is core attachment. The P2 globular domain stretch occupies residues 426 to 649 (AIPSPGDTFN…EMRTSVTGSR (224 aa)). Positions 650-794 (SMISSEEPDT…NVSGDRGHAE (145 aa)) are acidic. The span at 681 to 697 (ETDYEDEEDEDEDDEAD) shows a compositional bias: acidic residues. Positions 681–715 (ETDYEDEEDEDEDDEADRFDLHSSYGSEPEDDDEN) are disordered.

It belongs to the astroviridae capsid polyprotein family. As to quaternary structure, heterodimer with spike protein VP27. The spikes form a globular dimer with 30 spikes covering the mature virion. Spike protein VP25 that lacks the core attachment region may need to dimerize with spike protein VP27 to remain stably bound to the viral particle. Heterodimer with spike protein VP25. The spikes form a globular dimer with 30 spikes covering the mature virion. Spike protein VP25 that lacks the core attachment region may need to dimerize with spike protein VP27 to remain stably bound to the viral particle. In terms of processing, specific enzymatic cleavages by the host yield mature proteins. VP90 acidic C-terminal domain is eliminated from the immature virion by host caspases during viral maturation giving rise to virions composed of VP70. The virus can then dissociate from cellular membranes and exit the cell. Further cleavages by host extracellular proteases occur resulting in the three structural proteins VP34, VP27 and VP25 and conferring infectivity.

Its subcellular location is the virion. The protein resides in the host extracellular space. Functionally, the capsid polyprotein VP90 self-assembles and undergoes a proteolytic cleavage by host caspases to yield the immature VP70 virion. The immature virion is composed of 180 VP70 subunits with 90 dimeric spikes and displays a T=3 icosahedral symmetry. During maturation, VP70 undergoes a loss of 60 peripentonal spikes, which likely plays an important role in viral infectivity. In terms of biological role, self-assembles to form an icosahedral capsid with a T=3 symmetry, about 43 nm in diameter. This forms contains only 30 spikes located on the icosahedral 2-fold axes. Its function is as follows. VP25 and VP27 Forms the spikes at the surface of the virion. This forms contains only 30 spikes located on the icosahedral 2-fold axes. Plays a role in the attachment to target host cell. This attachment induces virion internalization through clathrin-dependent endocytosis. The protein is Capsid polyprotein VP90 of Homo sapiens (Human).